The sequence spans 499 residues: Glycerol kinase (499 aa).

An ADP-binding site is contributed by T13. ATP contacts are provided by T13, T14, and S15. T13 provides a ligand contact to sn-glycerol 3-phosphate. R17 is an ADP binding site. 4 residues coordinate sn-glycerol 3-phosphate: R83, E84, Y135, and D245. 5 residues coordinate glycerol: R83, E84, Y135, D245, and Q246. Positions 267 and 310 each coordinate ADP. ATP-binding residues include T267, G310, Q314, and A411. Positions 411 and 415 each coordinate ADP.

This sequence belongs to the FGGY kinase family.

The enzyme catalyses glycerol + ATP = sn-glycerol 3-phosphate + ADP + H(+). It functions in the pathway polyol metabolism; glycerol degradation via glycerol kinase pathway; sn-glycerol 3-phosphate from glycerol: step 1/1. Its activity is regulated as follows. Inhibited by fructose 1,6-bisphosphate (FBP). In terms of biological role, key enzyme in the regulation of glycerol uptake and metabolism. Catalyzes the phosphorylation of glycerol to yield sn-glycerol 3-phosphate. The sequence is that of Glycerol kinase from Xylella fastidiosa (strain 9a5c).